A 476-amino-acid polypeptide reads, in one-letter code: Cardiolipin synthase (476 aa).

Helical transmembrane passes span 2–22 (HLFI…IIFI) and 31–51 (WAWI…YILF). PLD phosphodiesterase domains are found at residues 207-234 (INYR…GDEY) and 389-416 (EKGF…DIRS). Catalysis depends on residues histidine 212, lysine 214, aspartate 219, histidine 394, lysine 396, and aspartate 401.

This sequence belongs to the phospholipase D family. Cardiolipin synthase subfamily.

It localises to the cell membrane. The enzyme catalyses 2 a 1,2-diacyl-sn-glycero-3-phospho-(1'-sn-glycerol) = a cardiolipin + glycerol. In terms of biological role, catalyzes the reversible phosphatidyl group transfer from one phosphatidylglycerol molecule to another to form cardiolipin (CL) (diphosphatidylglycerol) and glycerol. This is Cardiolipin synthase (cls) from Clostridium perfringens (strain 13 / Type A).